Here is a 194-residue protein sequence, read N- to C-terminus: Probable GTP-binding protein EngB (194 aa).

The region spanning 22 to 194 is the EngB-type G domain; it reads PLPEVALAGR…AWKAILHAIS (173 aa). Residues 30-37, 57-61, 75-78, 142-145, and 174-176 contribute to the GTP site; these read GRSNVGKS, GKTQT, DVPG, TKCD, and FSS. Serine 37 and threonine 59 together coordinate Mg(2+).

Belongs to the TRAFAC class TrmE-Era-EngA-EngB-Septin-like GTPase superfamily. EngB GTPase family. It depends on Mg(2+) as a cofactor.

Necessary for normal cell division and for the maintenance of normal septation. In Halalkalibacterium halodurans (strain ATCC BAA-125 / DSM 18197 / FERM 7344 / JCM 9153 / C-125) (Bacillus halodurans), this protein is Probable GTP-binding protein EngB.